We begin with the raw amino-acid sequence, 848 residues long: Adenylate cyclase (848 aa).

Residues 1 to 535 (MYLYIETLKQ…DVSHHFPLRL (535 aa)) form a catalytic region. The regulatory stretch occupies residues 541-848 (KALYSPCEIR…DTPLLQQYFS (308 aa)). Phosphohistidine; by CRR is present on histidine 609.

Belongs to the adenylyl cyclase class-1 family.

The protein localises to the cytoplasm. It carries out the reaction ATP = 3',5'-cyclic AMP + diphosphate. The polypeptide is Adenylate cyclase (cyaA) (Shigella flexneri).